Here is a 177-residue protein sequence, read N- to C-terminus: Peptidyl-tRNA hydrolase 1 (177 aa).

Tyr-18 contributes to the tRNA binding site. Catalysis depends on His-23, which acts as the Proton acceptor. Positions 65, 67, and 113 each coordinate tRNA.

The protein belongs to the PTH family. As to quaternary structure, monomer.

The protein resides in the cytoplasm. It carries out the reaction an N-acyl-L-alpha-aminoacyl-tRNA + H2O = an N-acyl-L-amino acid + a tRNA + H(+). Hydrolyzes ribosome-free peptidyl-tRNAs (with 1 or more amino acids incorporated), which drop off the ribosome during protein synthesis, or as a result of ribosome stalling. In terms of biological role, catalyzes the release of premature peptidyl moieties from peptidyl-tRNA molecules trapped in stalled 50S ribosomal subunits, and thus maintains levels of free tRNAs and 50S ribosomes. In Corynebacterium glutamicum (strain ATCC 13032 / DSM 20300 / JCM 1318 / BCRC 11384 / CCUG 27702 / LMG 3730 / NBRC 12168 / NCIMB 10025 / NRRL B-2784 / 534), this protein is Peptidyl-tRNA hydrolase 1.